Consider the following 457-residue polypeptide: Argininosuccinate lyase (457 aa).

Belongs to the lyase 1 family. Argininosuccinate lyase subfamily.

The protein localises to the cytoplasm. The catalysed reaction is 2-(N(omega)-L-arginino)succinate = fumarate + L-arginine. The protein operates within amino-acid biosynthesis; L-arginine biosynthesis; L-arginine from L-ornithine and carbamoyl phosphate: step 3/3. The polypeptide is Argininosuccinate lyase (Staphylococcus carnosus (strain TM300)).